Consider the following 394-residue polypeptide: MLPLTLSDLEGLPLGCSIVGSRCSRQQLQAHLEPWCQGDSSFDLLLLLAATRTAEREGISAAGATAASRRLTALADADLLLHGPGKPRRWPLPPLPAGVSPALLSHVALQRLPMQPLVAALGLEHEATFPHLRLESPQAGPARCLSTGRAMDPERVERLWRKGMRLGAQLRRPLLLAECVPGGTTTAQAVLKALGVPVNGLISGSARQPPQELKRHLVEQGLCRAQLPAWPSPQAVLAAVGDPFQAVAAGVLVSAQQPVLLGGGSQMAAVATLALASLPDQERKVLADRVLLGSTAWLALEWIRGGDMPALGCLLDEVGHRFGVSLAGLASGLRFHASRQPALRDYEDGFVKEGVGAGALLLLAQLQGQHSEALVEGCERALDQLLASAVASEV.

It belongs to the UPF0284 family.

The chain is UPF0284 protein SYNW1869 from Parasynechococcus marenigrum (strain WH8102).